The sequence spans 226 residues: Thiamine-phosphate synthase (226 aa).

4-amino-2-methyl-5-(diphosphooxymethyl)pyrimidine contacts are provided by residues 46–50 (QFRDK) and Asp83. Mg(2+) is bound by residues Asp84 and Asp103. Ser122 lines the 4-amino-2-methyl-5-(diphosphooxymethyl)pyrimidine pocket. 149–151 (TQS) serves as a coordination point for 2-[(2R,5Z)-2-carboxy-4-methylthiazol-5(2H)-ylidene]ethyl phosphate. 4-amino-2-methyl-5-(diphosphooxymethyl)pyrimidine is bound at residue Lys152. Residues Gly181 and 201–202 (IT) contribute to the 2-[(2R,5Z)-2-carboxy-4-methylthiazol-5(2H)-ylidene]ethyl phosphate site.

It belongs to the thiamine-phosphate synthase family. The cofactor is Mg(2+).

The enzyme catalyses 2-[(2R,5Z)-2-carboxy-4-methylthiazol-5(2H)-ylidene]ethyl phosphate + 4-amino-2-methyl-5-(diphosphooxymethyl)pyrimidine + 2 H(+) = thiamine phosphate + CO2 + diphosphate. It carries out the reaction 2-(2-carboxy-4-methylthiazol-5-yl)ethyl phosphate + 4-amino-2-methyl-5-(diphosphooxymethyl)pyrimidine + 2 H(+) = thiamine phosphate + CO2 + diphosphate. It catalyses the reaction 4-methyl-5-(2-phosphooxyethyl)-thiazole + 4-amino-2-methyl-5-(diphosphooxymethyl)pyrimidine + H(+) = thiamine phosphate + diphosphate. The protein operates within cofactor biosynthesis; thiamine diphosphate biosynthesis; thiamine phosphate from 4-amino-2-methyl-5-diphosphomethylpyrimidine and 4-methyl-5-(2-phosphoethyl)-thiazole: step 1/1. Its function is as follows. Condenses 4-methyl-5-(beta-hydroxyethyl)thiazole monophosphate (THZ-P) and 2-methyl-4-amino-5-hydroxymethyl pyrimidine pyrophosphate (HMP-PP) to form thiamine monophosphate (TMP). The protein is Thiamine-phosphate synthase of Haemophilus influenzae (strain ATCC 51907 / DSM 11121 / KW20 / Rd).